Consider the following 207-residue polypeptide: Small ribosomal subunit protein uS4A (207 aa).

One can recognise an S4 RNA-binding domain in the interval 98 to 158; it reads TRLDNVAYRL…EKSKSSAKFK (61 aa).

This sequence belongs to the universal ribosomal protein uS4 family. Part of the 30S ribosomal subunit. Contacts protein S5. The interaction surface between S4 and S5 is involved in control of translational fidelity.

Functionally, one of the primary rRNA binding proteins, it binds directly to 16S rRNA where it nucleates assembly of the body of the 30S subunit. With S5 and S12 plays an important role in translational accuracy. This chain is Small ribosomal subunit protein uS4A, found in Alkaliphilus oremlandii (strain OhILAs) (Clostridium oremlandii (strain OhILAs)).